The primary structure comprises 113 residues: Large ribosomal subunit protein uL22 (113 aa).

It belongs to the universal ribosomal protein uL22 family. Part of the 50S ribosomal subunit.

Functionally, this protein binds specifically to 23S rRNA; its binding is stimulated by other ribosomal proteins, e.g. L4, L17, and L20. It is important during the early stages of 50S assembly. It makes multiple contacts with different domains of the 23S rRNA in the assembled 50S subunit and ribosome. Its function is as follows. The globular domain of the protein is located near the polypeptide exit tunnel on the outside of the subunit, while an extended beta-hairpin is found that lines the wall of the exit tunnel in the center of the 70S ribosome. The sequence is that of Large ribosomal subunit protein uL22 from Geobacillus kaustophilus (strain HTA426).